The sequence spans 206 residues: High frequency lysogenization protein HflD homolog (206 aa).

This sequence belongs to the HflD family.

It is found in the cytoplasm. Its subcellular location is the cell inner membrane. This chain is High frequency lysogenization protein HflD homolog, found in Ectopseudomonas mendocina (strain ymp) (Pseudomonas mendocina).